We begin with the raw amino-acid sequence, 509 residues long: ATP synthase subunit alpha (509 aa).

An ATP-binding site is contributed by 169–176 (GDRQTGKT).

It belongs to the ATPase alpha/beta chains family. As to quaternary structure, F-type ATPases have 2 components, CF(1) - the catalytic core - and CF(0) - the membrane proton channel. CF(1) has five subunits: alpha(3), beta(3), gamma(1), delta(1), epsilon(1). CF(0) has four main subunits: a(1), b(1), b'(1) and c(9-12).

It localises to the cell inner membrane. It catalyses the reaction ATP + H2O + 4 H(+)(in) = ADP + phosphate + 5 H(+)(out). Functionally, produces ATP from ADP in the presence of a proton gradient across the membrane. The alpha chain is a regulatory subunit. The polypeptide is ATP synthase subunit alpha (Bradyrhizobium sp. (strain ORS 278)).